We begin with the raw amino-acid sequence, 81 residues long: Small ribosomal subunit protein bS18 (81 aa).

This sequence belongs to the bacterial ribosomal protein bS18 family. Part of the 30S ribosomal subunit. Forms a tight heterodimer with protein bS6.

Functionally, binds as a heterodimer with protein bS6 to the central domain of the 16S rRNA, where it helps stabilize the platform of the 30S subunit. This chain is Small ribosomal subunit protein bS18, found in Chlamydia trachomatis serovar L2 (strain ATCC VR-902B / DSM 19102 / 434/Bu).